The sequence spans 802 residues: Elongation factor G, mitochondrial (802 aa).

Residues 1 to 24 constitute a mitochondrion transit peptide; that stretch reads MRCPSLARLPNRALSGLTRSPVRL. In terms of domain architecture, tr-type G spans 100–387; it reads SRLRNIGIAA…GVIDYLPNPS (288 aa). Residues 109–116, 185–189, and 239–242 each bind GTP; these read AHIDSGKT, DTPGH, and NKMD.

Belongs to the TRAFAC class translation factor GTPase superfamily. Classic translation factor GTPase family. EF-G/EF-2 subfamily.

It localises to the mitochondrion. The protein operates within protein biosynthesis; polypeptide chain elongation. Its function is as follows. Mitochondrial GTPase that catalyzes the GTP-dependent ribosomal translocation step during translation elongation. During this step, the ribosome changes from the pre-translocational (PRE) to the post-translocational (POST) state as the newly formed A-site-bound peptidyl-tRNA and P-site-bound deacylated tRNA move to the P and E sites, respectively. Catalyzes the coordinated movement of the two tRNA molecules, the mRNA and conformational changes in the ribosome. The protein is Elongation factor G, mitochondrial (mef1) of Aspergillus fumigatus (strain CBS 144.89 / FGSC A1163 / CEA10) (Neosartorya fumigata).